Here is a 171-residue protein sequence, read N- to C-terminus: Methylated-DNA--protein-cysteine methyltransferase (171 aa).

The active-site Nucleophile; methyl group acceptor is C139.

Belongs to the MGMT family.

The protein localises to the cytoplasm. It catalyses the reaction a 6-O-methyl-2'-deoxyguanosine in DNA + L-cysteinyl-[protein] = S-methyl-L-cysteinyl-[protein] + a 2'-deoxyguanosine in DNA. The catalysed reaction is a 4-O-methyl-thymidine in DNA + L-cysteinyl-[protein] = a thymidine in DNA + S-methyl-L-cysteinyl-[protein]. Its function is as follows. Involved in the cellular defense against the biological effects of O6-methylguanine (O6-MeG) and O4-methylthymine (O4-MeT) in DNA. Repairs the methylated nucleobase in DNA by stoichiometrically transferring the methyl group to a cysteine residue in the enzyme. This is a suicide reaction: the enzyme is irreversibly inactivated. The protein is Methylated-DNA--protein-cysteine methyltransferase of Shigella flexneri.